The following is a 179-amino-acid chain: Hypoxanthine-guanine phosphoribosyltransferase (179 aa).

Diphosphate-binding residues include Lys42 and Gly43. Residues Glu98 and Asp99 each coordinate Mg(2+). Catalysis depends on Glu102, which acts as the Proton acceptor. Residues Lys130, 151–152 (FV), and Asp158 each bind GMP. Position 164 (Arg164) interacts with diphosphate.

This sequence belongs to the purine/pyrimidine phosphoribosyltransferase family. Requires Mg(2+) as cofactor.

Its subcellular location is the cytoplasm. It catalyses the reaction IMP + diphosphate = hypoxanthine + 5-phospho-alpha-D-ribose 1-diphosphate. The catalysed reaction is GMP + diphosphate = guanine + 5-phospho-alpha-D-ribose 1-diphosphate. Its pathway is purine metabolism; IMP biosynthesis via salvage pathway; IMP from hypoxanthine: step 1/1. It participates in purine metabolism; GMP biosynthesis via salvage pathway; GMP from guanine: step 1/1. Functionally, purine salvage pathway enzyme that catalyzes the transfer of the ribosyl-5-phosphate group from 5-phospho-alpha-D-ribose 1-diphosphate (PRPP) to the N9 position of the 6-oxopurines hypoxanthine and guanine to form the corresponding ribonucleotides IMP (inosine 5'-monophosphate) and GMP (guanosine 5'-monophosphate), with the release of PPi. The chain is Hypoxanthine-guanine phosphoribosyltransferase (hpt) from Staphylococcus aureus (strain COL).